Here is a 201-residue protein sequence, read N- to C-terminus: Small ribosomal subunit protein uS4 (201 aa).

An S4 RNA-binding domain is found at 91 to 157 (CRLDNVVYRA…TPFIIAKETI (67 aa)).

It belongs to the universal ribosomal protein uS4 family. As to quaternary structure, part of the 30S ribosomal subunit. Contacts protein S5. The interaction surface between S4 and S5 is involved in control of translational fidelity.

Functionally, one of the primary rRNA binding proteins, it binds directly to 16S rRNA where it nucleates assembly of the body of the 30S subunit. In terms of biological role, with S5 and S12 plays an important role in translational accuracy. This is Small ribosomal subunit protein uS4 from Saccharopolyspora erythraea (strain ATCC 11635 / DSM 40517 / JCM 4748 / NBRC 13426 / NCIMB 8594 / NRRL 2338).